Consider the following 81-residue polypeptide: Large ribosomal subunit protein bL27 (81 aa).

Over residues 1 to 11 (MATSKSGGSSK) the composition is skewed to polar residues. Residues 1–26 (MATSKSGGSSKNGRDSISKRLGVKRS) form a disordered region.

This sequence belongs to the bacterial ribosomal protein bL27 family.

This chain is Large ribosomal subunit protein bL27, found in Borrelia turicatae (strain 91E135).